A 317-amino-acid polypeptide reads, in one-letter code: Acetyl-coenzyme A carboxylase carboxyl transferase subunit alpha (317 aa).

Residues 33-294 (NINKEINCLR…KNRILKDLKE (262 aa)) enclose the CoA carboxyltransferase C-terminal domain.

Belongs to the AccA family. Acetyl-CoA carboxylase is a heterohexamer composed of biotin carboxyl carrier protein (AccB), biotin carboxylase (AccC) and two subunits each of ACCase subunit alpha (AccA) and ACCase subunit beta (AccD).

The protein resides in the cytoplasm. It catalyses the reaction N(6)-carboxybiotinyl-L-lysyl-[protein] + acetyl-CoA = N(6)-biotinyl-L-lysyl-[protein] + malonyl-CoA. Its pathway is lipid metabolism; malonyl-CoA biosynthesis; malonyl-CoA from acetyl-CoA: step 1/1. Its function is as follows. Component of the acetyl coenzyme A carboxylase (ACC) complex. First, biotin carboxylase catalyzes the carboxylation of biotin on its carrier protein (BCCP) and then the CO(2) group is transferred by the carboxyltransferase to acetyl-CoA to form malonyl-CoA. The chain is Acetyl-coenzyme A carboxylase carboxyl transferase subunit alpha from Wigglesworthia glossinidia brevipalpis.